Consider the following 61-residue polypeptide: Cytotoxin 2 (61 aa).

Intrachain disulfides connect Cys3–Cys22, Cys15–Cys39, Cys43–Cys54, and Cys55–Cys60.

The protein belongs to the three-finger toxin family. Short-chain subfamily. Type IB cytotoxin sub-subfamily. As to expression, expressed by the venom gland.

The protein localises to the secreted. This protein lyses red blood cells, has cytotoxic activity and induces hypotension, but is not neurotoxic. In addition, it induces direct paralysis of the muscle fiber. This is Cytotoxin 2 from Hemachatus haemachatus (Rinkhals).